The sequence spans 194 residues: Protein GrpE (194 aa).

The segment covering 1–12 (MNKQKNNRERTP) has biased composition (basic and acidic residues). The interval 1 to 44 (MNKQKNNRERTPQPEQDTERDEQLTNSHENDIDSAPAAEENDKV) is disordered.

It belongs to the GrpE family. Homodimer.

It localises to the cytoplasm. Functionally, participates actively in the response to hyperosmotic and heat shock by preventing the aggregation of stress-denatured proteins, in association with DnaK and GrpE. It is the nucleotide exchange factor for DnaK and may function as a thermosensor. Unfolded proteins bind initially to DnaJ; upon interaction with the DnaJ-bound protein, DnaK hydrolyzes its bound ATP, resulting in the formation of a stable complex. GrpE releases ADP from DnaK; ATP binding to DnaK triggers the release of the substrate protein, thus completing the reaction cycle. Several rounds of ATP-dependent interactions between DnaJ, DnaK and GrpE are required for fully efficient folding. The chain is Protein GrpE from Porphyromonas gingivalis (strain ATCC 33277 / DSM 20709 / CIP 103683 / JCM 12257 / NCTC 11834 / 2561).